A 201-amino-acid polypeptide reads, in one-letter code: Small ribosomal subunit protein uS4 (201 aa).

The segment at 28-47 is disordered; that stretch reads KKNYPPGQHGNSRKRKTSEY. One can recognise an S4 RNA-binding domain in the interval 92-155; sequence GRLDNIVFRL…KSLEVIANSL (64 aa).

This sequence belongs to the universal ribosomal protein uS4 family. As to quaternary structure, part of the 30S ribosomal subunit. Contacts protein S5. The interaction surface between S4 and S5 is involved in control of translational fidelity.

In terms of biological role, one of the primary rRNA binding proteins, it binds directly to 16S rRNA where it nucleates assembly of the body of the 30S subunit. With S5 and S12 plays an important role in translational accuracy. In Bacteroides fragilis (strain YCH46), this protein is Small ribosomal subunit protein uS4.